A 198-amino-acid polypeptide reads, in one-letter code: Elongation factor Ts (198 aa).

The involved in Mg(2+) ion dislocation from EF-Tu stretch occupies residues 81 to 84 (TDFV).

It belongs to the EF-Ts family.

Its subcellular location is the cytoplasm. Its function is as follows. Associates with the EF-Tu.GDP complex and induces the exchange of GDP to GTP. It remains bound to the aminoacyl-tRNA.EF-Tu.GTP complex up to the GTP hydrolysis stage on the ribosome. This is Elongation factor Ts from Dictyoglomus thermophilum (strain ATCC 35947 / DSM 3960 / H-6-12).